We begin with the raw amino-acid sequence, 308 residues long: C-4 methylsterol oxidase (308 aa).

The helical transmembrane segment at 56–76 (LLFFLTHEIFYFGRCLPWAII) threads the bilayer. In terms of domain architecture, Fatty acid hydroxylase spans 145-282 (WAVFFVLEDT…FRWWDFILDT (138 aa)). The Histidine box-1 motif lies at 160-164 (HRGLH). Positions 173–177 (HKQHH) match the Histidine box-2 motif. A Histidine box-3 motif is present at residues 257–263 (HHDEHHH).

It belongs to the sterol desaturase family. Fe cation serves as cofactor.

It is found in the endoplasmic reticulum membrane. The catalysed reaction is 4,4-dimethyl-5alpha-cholest-7-en-3beta-ol + 6 Fe(II)-[cytochrome b5] + 3 O2 + 5 H(+) = 4alpha-carboxy-4beta-methyl-5alpha-cholest-7-ene-3beta-ol + 6 Fe(III)-[cytochrome b5] + 4 H2O. It participates in steroid biosynthesis; zymosterol biosynthesis; zymosterol from lanosterol: step 3/6. Functionally, C-4 methylsterol oxidase; part of the third module of ergosterol biosynthesis pathway that includes the late steps of the pathway. ERG25 is a catalytic component of the C-4 demethylation complex that catalyzes the conversion of 4,4-dimethylfecosterol into fecosterol via 4-methylfecosterol. Catalyzes the three-step monooxygenation required for the demethylation of 4,4-dimethyl and 4alpha-methylsterols. The third module or late pathway involves the ergosterol synthesis itself through consecutive reactions that mainly occur in the endoplasmic reticulum (ER) membrane. Firstly, the squalene synthase ERG9 catalyzes the condensation of 2 farnesyl pyrophosphate moieties to form squalene, which is the precursor of all steroids. Squalene synthase is crucial for balancing the incorporation of farnesyl diphosphate (FPP) into sterol and nonsterol isoprene synthesis. Secondly, the squalene epoxidase ERG1 catalyzes the stereospecific oxidation of squalene to (S)-2,3-epoxysqualene, which is considered to be a rate-limiting enzyme in steroid biosynthesis. Then, the lanosterol synthase ERG7 catalyzes the cyclization of (S)-2,3 oxidosqualene to lanosterol, a reaction that forms the sterol core. In the next steps, lanosterol is transformed to zymosterol through a complex process involving various demethylation, reduction and desaturation reactions. The lanosterol 14-alpha-demethylase ERG11 (also known as CYP51) catalyzes C14-demethylation of lanosterol to produce 4,4'-dimethyl cholesta-8,14,24-triene-3-beta-ol, which is critical for ergosterol biosynthesis. The C-14 reductase ERG24 reduces the C14=C15 double bond of 4,4-dimethyl-cholesta-8,14,24-trienol to produce 4,4-dimethyl-cholesta-8,24-dienol. 4,4-dimethyl-cholesta-8,24-dienol is substrate of the C-4 demethylation complex ERG25-ERG26-ERG27 in which ERG25 catalyzes the three-step monooxygenation required for the demethylation of 4,4-dimethyl and 4alpha-methylsterols, ERG26 catalyzes the oxidative decarboxylation that results in a reduction of the 3-beta-hydroxy group at the C-3 carbon to an oxo group, and ERG27 is responsible for the reduction of the keto group on the C-3. ERG28 has a role as a scaffold to help anchor ERG25, ERG26 and ERG27 to the endoplasmic reticulum and ERG29 regulates the activity of the iron-containing C4-methylsterol oxidase ERG25. Then, the sterol 24-C-methyltransferase ERG6 catalyzes the methyl transfer from S-adenosyl-methionine to the C-24 of zymosterol to form fecosterol. The C-8 sterol isomerase ERG2 catalyzes the reaction which results in unsaturation at C-7 in the B ring of sterols and thus converts fecosterol to episterol. The sterol-C5-desaturase ERG3 then catalyzes the introduction of a C-5 double bond in the B ring to produce 5-dehydroepisterol. The C-22 sterol desaturase ERG5 further converts 5-dehydroepisterol into ergosta-5,7,22,24(28)-tetraen-3beta-ol by forming the C-22(23) double bond in the sterol side chain. Finally, ergosta-5,7,22,24(28)-tetraen-3beta-ol is substrate of the C-24(28) sterol reductase ERG4 to produce ergosterol. This is C-4 methylsterol oxidase from Candida albicans (strain SC5314 / ATCC MYA-2876) (Yeast).